Here is a 372-residue protein sequence, read N- to C-terminus: Bifunctional enzyme IspD/IspF (372 aa).

Residues 1–211 (MLDISLIMLG…SALKAPENEL (211 aa)) form a 2-C-methyl-D-erythritol 4-phosphate cytidylyltransferase region. Residues 212 to 372 (FVGSGFDVHE…SLKFYNWTQI (161 aa)) form a 2-C-methyl-D-erythritol 2,4-cyclodiphosphate synthase region. A divalent metal cation is bound by residues Asp218 and His220. Residues 218–220 (DVH) and 244–245 (HS) contribute to the 4-CDP-2-C-methyl-D-erythritol 2-phosphate site. Residue His252 coordinates a divalent metal cation. Residues 266 to 268 (DIG), 271 to 275 (FPDTD), 342 to 345 (TTTE), Phe349, and Arg352 each bind 4-CDP-2-C-methyl-D-erythritol 2-phosphate.

The protein in the N-terminal section; belongs to the IspD/TarI cytidylyltransferase family. IspD subfamily. It in the C-terminal section; belongs to the IspF family. Requires a divalent metal cation as cofactor.

The enzyme catalyses 2-C-methyl-D-erythritol 4-phosphate + CTP + H(+) = 4-CDP-2-C-methyl-D-erythritol + diphosphate. It carries out the reaction 4-CDP-2-C-methyl-D-erythritol 2-phosphate = 2-C-methyl-D-erythritol 2,4-cyclic diphosphate + CMP. It functions in the pathway isoprenoid biosynthesis; isopentenyl diphosphate biosynthesis via DXP pathway; isopentenyl diphosphate from 1-deoxy-D-xylulose 5-phosphate: step 2/6. It participates in isoprenoid biosynthesis; isopentenyl diphosphate biosynthesis via DXP pathway; isopentenyl diphosphate from 1-deoxy-D-xylulose 5-phosphate: step 4/6. Bifunctional enzyme that catalyzes the formation of 4-diphosphocytidyl-2-C-methyl-D-erythritol from CTP and 2-C-methyl-D-erythritol 4-phosphate (MEP) (IspD), and catalyzes the conversion of 4-diphosphocytidyl-2-C-methyl-D-erythritol 2-phosphate (CDP-ME2P) to 2-C-methyl-D-erythritol 2,4-cyclodiphosphate (ME-CPP) with a corresponding release of cytidine 5-monophosphate (CMP) (IspF). The protein is Bifunctional enzyme IspD/IspF of Campylobacter concisus (strain 13826).